Consider the following 179-residue polypeptide: uncharacterized protein (179 aa).

This is an uncharacterized protein from Methanocaldococcus jannaschii (strain ATCC 43067 / DSM 2661 / JAL-1 / JCM 10045 / NBRC 100440) (Methanococcus jannaschii).